Here is a 901-residue protein sequence, read N- to C-terminus: MutS protein homolog 5 (901 aa).

Residue 643–650 (GANASGKS) participates in ATP binding.

Belongs to the DNA mismatch repair MutS family. In terms of assembly, heterooligomer of MSH4 and MSH5.

Its function is as follows. Involved in meiotic recombination. Facilitate crossovers between homologs during meiosis. The protein is MutS protein homolog 5 (MSH5) of Saccharomyces cerevisiae (strain ATCC 204508 / S288c) (Baker's yeast).